Here is a 134-residue protein sequence, read N- to C-terminus: DNA-directed RNA polymerase subunit omega (134 aa).

Residues 76 to 102 are disordered; the sequence is EVDEPEPDPASMIAAGGAAAADSEEQD.

It belongs to the RNA polymerase subunit omega family. In terms of assembly, the RNAP catalytic core consists of 2 alpha, 1 beta, 1 beta' and 1 omega subunit. When a sigma factor is associated with the core the holoenzyme is formed, which can initiate transcription.

The enzyme catalyses RNA(n) + a ribonucleoside 5'-triphosphate = RNA(n+1) + diphosphate. Its function is as follows. Promotes RNA polymerase assembly. Latches the N- and C-terminal regions of the beta' subunit thereby facilitating its interaction with the beta and alpha subunits. The sequence is that of DNA-directed RNA polymerase subunit omega from Rhizobium etli (strain ATCC 51251 / DSM 11541 / JCM 21823 / NBRC 15573 / CFN 42).